The primary structure comprises 314 residues: DNA-directed RNA polymerase subunit alpha (314 aa).

Residues 1–227 form an alpha N-terminal domain (alpha-NTD) region; it reads MLEIEKPKIE…DYLKLFVALT (227 aa). The tract at residues 244–314 is alpha C-terminal domain (alpha-CTD); sequence QDKILEMTIE…LGLSLRKSED (71 aa).

Belongs to the RNA polymerase alpha chain family. Homodimer. The RNAP catalytic core consists of 2 alpha, 1 beta, 1 beta' and 1 omega subunit. When a sigma factor is associated with the core the holoenzyme is formed, which can initiate transcription.

The catalysed reaction is RNA(n) + a ribonucleoside 5'-triphosphate = RNA(n+1) + diphosphate. Its function is as follows. DNA-dependent RNA polymerase catalyzes the transcription of DNA into RNA using the four ribonucleoside triphosphates as substrates. In Heliobacterium modesticaldum (strain ATCC 51547 / Ice1), this protein is DNA-directed RNA polymerase subunit alpha.